Reading from the N-terminus, the 408-residue chain is Acetate kinase (408 aa).

Position 7 (N7) interacts with Mg(2+). K14 lines the ATP pocket. A substrate-binding site is contributed by R91. D148 (proton donor/acceptor) is an active-site residue. Residues 208 to 212 (HLGNG), 283 to 285 (DFR), and 331 to 335 (GIGEN) each bind ATP. E384 is a Mg(2+) binding site.

Belongs to the acetokinase family. As to quaternary structure, homodimer. Mg(2+) serves as cofactor. It depends on Mn(2+) as a cofactor.

Its subcellular location is the cytoplasm. It carries out the reaction acetate + ATP = acetyl phosphate + ADP. Its pathway is metabolic intermediate biosynthesis; acetyl-CoA biosynthesis; acetyl-CoA from acetate: step 1/2. In terms of biological role, catalyzes the formation of acetyl phosphate from acetate and ATP. Can also catalyze the reverse reaction. The sequence is that of Acetate kinase from Methanosarcina barkeri (strain Fusaro / DSM 804).